Here is a 142-residue protein sequence, read N- to C-terminus: MENMAEDLRQKAMALEIYNQQLQMIQSEITSIRALKSEIMNSIKTIENIKADEETLIPVGPGVFLKAKIVDDKALIGVKSDIYVEKSFNEVIEDLKKSVEDLDKAEKEGMKKAEELAKAITALRKELQTEIQKAQQAQDKKQ.

It belongs to the prefoldin subunit alpha family. Heterohexamer of two alpha and four beta subunits.

It is found in the cytoplasm. In terms of biological role, molecular chaperone capable of stabilizing a range of proteins. Seems to fulfill an ATP-independent, HSP70-like function in archaeal de novo protein folding. The polypeptide is Prefoldin subunit alpha 1 (pfdA1) (Methanocaldococcus jannaschii (strain ATCC 43067 / DSM 2661 / JAL-1 / JCM 10045 / NBRC 100440) (Methanococcus jannaschii)).